Here is a 438-residue protein sequence, read N- to C-terminus: Enolase (438 aa).

Residue Q174 participates in (2R)-2-phosphoglycerate binding. E216 serves as the catalytic Proton donor. D253, E297, and D324 together coordinate Mg(2+). Residues K349, R378, S379, and K400 each coordinate (2R)-2-phosphoglycerate. The active-site Proton acceptor is the K349.

The protein belongs to the enolase family. In terms of assembly, component of the RNA degradosome, a multiprotein complex involved in RNA processing and mRNA degradation. It depends on Mg(2+) as a cofactor.

Its subcellular location is the cytoplasm. It localises to the secreted. The protein resides in the cell surface. The enzyme catalyses (2R)-2-phosphoglycerate = phosphoenolpyruvate + H2O. Its pathway is carbohydrate degradation; glycolysis; pyruvate from D-glyceraldehyde 3-phosphate: step 4/5. Its function is as follows. Catalyzes the reversible conversion of 2-phosphoglycerate (2-PG) into phosphoenolpyruvate (PEP). It is essential for the degradation of carbohydrates via glycolysis. The protein is Enolase of Psychrobacter cryohalolentis (strain ATCC BAA-1226 / DSM 17306 / VKM B-2378 / K5).